Reading from the N-terminus, the 363-residue chain is UDP-N-acetylenolpyruvoylglucosamine reductase (363 aa).

The region spanning 25 to 201 (IGPVARRMLT…RSAPVRYREL (177 aa)) is the FAD-binding PCMH-type domain. Arg-168 is a catalytic residue. Ser-249 acts as the Proton donor in catalysis. Glu-352 is a catalytic residue.

Belongs to the MurB family. The cofactor is FAD.

The protein resides in the cytoplasm. It catalyses the reaction UDP-N-acetyl-alpha-D-muramate + NADP(+) = UDP-N-acetyl-3-O-(1-carboxyvinyl)-alpha-D-glucosamine + NADPH + H(+). It functions in the pathway cell wall biogenesis; peptidoglycan biosynthesis. Its function is as follows. Cell wall formation. This Mycolicibacterium smegmatis (strain ATCC 700084 / mc(2)155) (Mycobacterium smegmatis) protein is UDP-N-acetylenolpyruvoylglucosamine reductase.